We begin with the raw amino-acid sequence, 417 residues long: Serine hydroxymethyltransferase (417 aa).

(6S)-5,6,7,8-tetrahydrofolate is bound by residues L121 and 125-127; that span reads GHL. An N6-(pyridoxal phosphate)lysine modification is found at K229. A (6S)-5,6,7,8-tetrahydrofolate-binding site is contributed by 355-357; it reads SPF.

This sequence belongs to the SHMT family. Homodimer. The cofactor is pyridoxal 5'-phosphate.

It localises to the cytoplasm. The catalysed reaction is (6R)-5,10-methylene-5,6,7,8-tetrahydrofolate + glycine + H2O = (6S)-5,6,7,8-tetrahydrofolate + L-serine. The protein operates within one-carbon metabolism; tetrahydrofolate interconversion. It participates in amino-acid biosynthesis; glycine biosynthesis; glycine from L-serine: step 1/1. In terms of biological role, catalyzes the reversible interconversion of serine and glycine with tetrahydrofolate (THF) serving as the one-carbon carrier. This reaction serves as the major source of one-carbon groups required for the biosynthesis of purines, thymidylate, methionine, and other important biomolecules. Also exhibits THF-independent aldolase activity toward beta-hydroxyamino acids, producing glycine and aldehydes, via a retro-aldol mechanism. This Tolumonas auensis (strain DSM 9187 / NBRC 110442 / TA 4) protein is Serine hydroxymethyltransferase.